Here is a 452-residue protein sequence, read N- to C-terminus: Protein EARLY-RESPONSIVE TO DEHYDRATION 7, chloroplastic (452 aa).

Polar residues predominate over residues 1-18; sequence MESSGDKQTSSLYPTVDT. The transit peptide at 1-28 directs the protein to the chloroplast; that stretch reads MESSGDKQTSSLYPTVDTSNPEAPINPS. The segment at 1–37 is disordered; that stretch reads MESSGDKQTSSLYPTVDTSNPEAPINPSSSSSTNNLY. Over residues 19–37 the composition is skewed to low complexity; that stretch reads SNPEAPINPSSSSSTNNLY. The region spanning 258-426 is the Senescence domain; that stretch reads IATGSGHLIK…AWVAFKIRKA (169 aa).

It is found in the plastid. The protein resides in the chloroplast. This chain is Protein EARLY-RESPONSIVE TO DEHYDRATION 7, chloroplastic, found in Arabidopsis thaliana (Mouse-ear cress).